We begin with the raw amino-acid sequence, 211 residues long: Stromal cell-derived factor 2 (211 aa).

A signal peptide spans 1 to 18; the sequence is MAVVSLLLFGGLWSAVGS. MIR domains are found at residues 21–75, 83–138, and 139–193; these read LAVV…IRGK, GTPI…VLCN, and GPYW…AMEG.

It localises to the secreted. The chain is Stromal cell-derived factor 2 (SDF2) from Bos taurus (Bovine).